The primary structure comprises 260 residues: Circadian clock-controlled protein daywake (260 aa).

An N-terminal signal peptide occupies residues 1 to 25 (MQLTSASVCLLWMGLLSWVSHRIDA).

It belongs to the TO family.

Functionally, component of the circadian clock or downstream effector of clock function. Required for suppressing daytime sleep (siesta) under ambient environmental temperatures. Part of a heat avoidance mechanism that modulates daytime sleep behavior under different environmental temperatures to minimize the risk of heat exposure. Under cooler ambient temperatures, suppresses daytime sleep (siesta) and thus allows for longer periods of daytime activity. The sequence is that of Circadian clock-controlled protein daywake from Drosophila yakuba (Fruit fly).